Consider the following 184-residue polypeptide: UPF0398 protein BCAH820_1652 (184 aa).

It belongs to the UPF0398 family.

This Bacillus cereus (strain AH820) protein is UPF0398 protein BCAH820_1652.